The following is a 657-amino-acid chain: Probable potassium transport system protein Kup 1 (657 aa).

Helical transmembrane passes span 40 to 60 (VTSG…GDIG), 88 to 108 (VLSL…VLLL), 135 to 155 (WFLL…SMIT), 172 to 192 (PALE…LFAV), 198 to 218 (ALVA…IAVM), 241 to 261 (FLLS…LAVT), 282 to 302 (WMFF…ALVL), 320 to 340 (LVLP…QAVI), 380 to 400 (LLLI…NLAS), 402 to 422 (YGIA…VVIW), 432 to 452 (AAAV…ANLL), and 454 to 474 (LLEG…TIWT).

Belongs to the HAK/KUP transporter (TC 2.A.72) family.

It localises to the cell inner membrane. It catalyses the reaction K(+)(in) + H(+)(in) = K(+)(out) + H(+)(out). Functionally, transport of potassium into the cell. Likely operates as a K(+):H(+) symporter. This is Probable potassium transport system protein Kup 1 from Bradyrhizobium diazoefficiens (strain JCM 10833 / BCRC 13528 / IAM 13628 / NBRC 14792 / USDA 110).